The sequence spans 462 residues: Calcitonin gene-related peptide type 1 receptor (462 aa).

The N-terminal stretch at 1-22 is a signal peptide; that stretch reads MEKKFFLSFLFLLPFFMILVIA. At 23-140 the chain is on the extracellular side; sequence ESEEENPDDL…NTHEKVKTAL (118 aa). Intrachain disulfides connect C49-C75, C66-C106, and C89-C128. N67, N119, and N124 each carry an N-linked (GlcNAc...) asparagine glycan. Residues 141-165 traverse the membrane as a helical segment; that stretch reads NLFYLTIIGHVLSIASLLISLGIFF. Residues 166–176 are Cytoplasmic-facing; the sequence is YFKSLSCQRIT. A helical membrane pass occupies residues 177 to 199; it reads LHKNLFFSFVCNSVITIIHLTAV. Residues 200–210 lie on the Extracellular side of the membrane; it reads ANNQALVATNP. The helical transmembrane segment at 211–239 threads the bilayer; that stretch reads VSCKVSQFIHLYLMGCNYFWMLCEGIYLH. At 240 to 253 the chain is on the cytoplasmic side; sequence TLVVVAVFAEKQHL. The helical transmembrane segment at 254–274 threads the bilayer; sequence MWYYFLGWGFPLIPACIHAVA. The Extracellular portion of the chain corresponds to 275-290; that stretch reads RRLYYNDNCWISSDTQ. A required for RAMP3 interaction region spans residues 289–290; sequence TQ. Residues 291-315 traverse the membrane as a helical segment; it reads LLYIIHGPICAALLVNLFFLLNIVR. The Cytoplasmic segment spans residues 316-330; it reads VLITKLKVTHQAESN. The chain crosses the membrane as a helical span at residues 331 to 352; it reads LYMKAVRATLILVPLLGIEFVL. The Extracellular portion of the chain corresponds to 353-367; sequence IPWRPEGKIAEEIYD. The chain crosses the membrane as a helical span at residues 368–388; the sequence is YIINILMHYQGLLVSTIFCFF. The Cytoplasmic portion of the chain corresponds to 389 to 462; it reads NGEVQAILRR…VVIKPEKLYD (74 aa). S421 and S446 each carry phosphoserine.

Belongs to the G-protein coupled receptor 2 family. In terms of assembly, heterodimer of CALCRL and RAMP1; the receptor complex functions as CGRP receptor. Heterodimer of CALCRL and RAMP2 or CALCRL and RAMP3; the complexes function as adrenomedullin receptor.

The protein resides in the cell membrane. Functionally, g protein-coupled receptor which specificity is determined by its interaction with receptor-activity-modifying proteins (RAMPs). Together with RAMP1, form the receptor complex for calcitonin-gene-related peptides CALCA/CGRP1 and CALCB/CGRP2. Together with RAMP2 or RAMP3, function as receptor complexes for adrenomedullin (ADM and ADM2). Ligand binding causes a conformation change that triggers signaling via guanine nucleotide-binding proteins (G proteins) and modulates the activity of downstream effectors. Activates cAMP-dependent pathway. This chain is Calcitonin gene-related peptide type 1 receptor (CALCRL), found in Bos taurus (Bovine).